A 121-amino-acid chain; its full sequence is HTH-type transcriptional regulator Rv1152 (121 aa).

The region spanning 15–83 (KPLFDQLRTQ…GRFGTFISRF (69 aa)) is the HTH gntR-type domain. The H-T-H motif DNA-binding region spans 43-62 (VRDLAGQLGVAANTVARAYR).

It localises to the cytoplasm. It is found in the secreted. The protein resides in the cell wall. Transcriptional regulator that modulates resistance to vancomycin and aminoglycosides. Negatively regulates the expression of several genes responsive to vancomycin, resulting in decreased susceptibility of bacteria to vancomycin. Negatively regulates the expression of genes encoding the ribosome binding protein Hsp, the small subunit of sulfate adenylyltransferase CysD, the L-lysine-epsilon aminotransferase LAT and the protease HtpX. Also modulates purine metabolism and aminoglycoside antibiotic resistance. Negatively regulates the expression of purine metabolism-related genes and the accumulation of purine metabolites, which affects aminoglycoside antibiotic resistance. This chain is HTH-type transcriptional regulator Rv1152, found in Mycobacterium tuberculosis (strain ATCC 25618 / H37Rv).